We begin with the raw amino-acid sequence, 155 residues long: cAMP-dependent protein kinase type II-alpha regulatory subunit (155 aa).

The disordered stretch occupies residues 1-34; the sequence is SGSQDLEPSSGLVTDAIADSESEDDEDLDVPIPS. The segment at 1 to 81 is dimerization and phosphorylation; sequence SGSQDLEPSS…LQEACKDILL (81 aa). The segment covering 18-29 has biased composition (acidic residues); sequence ADSESEDDEDLD. Residues serine 20 and serine 22 each carry the phosphoserine modification. Residue serine 41 is modified to Phosphoserine; by PKA. 3',5'-cyclic AMP-binding positions include 82–155 and glutamate 150; that span reads FKNL…ALMY.

Belongs to the cAMP-dependent kinase regulatory chain family. The inactive form of the enzyme is composed of two regulatory chains and two catalytic chains. Activation by cAMP produces two active catalytic monomers and a regulatory dimer that binds four cAMP molecules. Interacts with AKAP4 and CBFA2T3. Interacts with the phosphorylated form of PJA2. Interacts with MYRIP; this interaction may link PKA to components of the exocytosis machinery, thus facilitating exocytosis, including insulin release. Forms a complex composed of PRKAR2A, GSK3B and GSKIP through GSKIP interaction; facilitates PKA-induced phosphorylation and regulates GSK3B activity. Interacts with ADCY8; inhibits adenylate cyclase activity through PKA phosphorylation. Phosphorylated by the activated catalytic chain. As to expression, four types of regulatory chains are found: I-alpha, I-beta, II-alpha, and II-beta. Their expression varies among tissues and is in some cases constitutive and in others inducible.

It is found in the cytoplasm. It localises to the cell membrane. Regulatory subunit of the cAMP-dependent protein kinases involved in cAMP signaling in cells. Type II regulatory chains mediate membrane association by binding to anchoring proteins, including the MAP2 kinase. The polypeptide is cAMP-dependent protein kinase type II-alpha regulatory subunit (PRKAR2A) (Sus scrofa (Pig)).